The primary structure comprises 434 residues: Probable proline transporter 2 (434 aa).

The next 11 membrane-spanning stretches (helical) occupy residues 26–46, 49–69, 106–126, 149–169, 171–191, 213–233, 251–271, 297–317, 339–359, 362–382, and 403–423; these read PWYQ…VLGY, SVMV…AAAI, LTWA…IILA, IALS…LSAL, IWLG…FVLS, IFTT…GMLP, LWFQ…MGYW, LSAF…MYEF, VGVR…LPFL, FMSL…ANHM, and VAGF…LIMV.

Belongs to the amino acid/polyamine transporter 2 family. Amino acid/auxin permease (AAAP) (TC 2.A.18.3) subfamily.

It is found in the cell membrane. Its function is as follows. Proline transporter that mediates proline transport across the plasma membrane. The chain is Probable proline transporter 2 from Oryza sativa subsp. japonica (Rice).